The sequence spans 349 residues: Leucine-rich repeat-containing protein 58 (349 aa).

LRR repeat units lie at residues 14–34, 35–56, 58–80, 81–102, 105–125, 128–149, 151–173, 174–195, 197–217, and 219–239; these read NLTH…NKRK, DVQQ…VNSF, HLHL…LGLT, KLKT…KELG, RLEV…QFLQ, TLKS…IENL, SLEF…ANLP, YLSY…LAQV, SLRS…ILSL, and QLQE…RDLT.

The sequence is that of Leucine-rich repeat-containing protein 58 (lrrc58) from Xenopus tropicalis (Western clawed frog).